Reading from the N-terminus, the 290-residue chain is Sodium/potassium-transporting ATPase subunit beta-2 (290 aa).

The Cytoplasmic portion of the chain corresponds to methionine 1–phenylalanine 39. The helical; Signal-anchor for type II membrane protein transmembrane segment at isoleucine 40 to serine 67 threads the bilayer. Residues aspartate 68–threonine 290 are Extracellular-facing. 2 N-linked (GlcNAc...) asparagine glycosylation sites follow: asparagine 96 and asparagine 118. Cysteines 129 and 150 form a disulfide. Residues asparagine 153 and asparagine 159 are each glycosylated (N-linked (GlcNAc...) asparagine). A disulfide bridge connects residues cysteine 160 and cysteine 177. N-linked (GlcNAc...) asparagine glycans are attached at residues asparagine 193, asparagine 197, and asparagine 238. Residues asparagine 193–threonine 290 form an immunoglobulin-like region. Cysteine 200 and cysteine 261 form a disulfide bridge.

It belongs to the X(+)/potassium ATPases subunit beta family. In terms of assembly, the sodium/potassium-transporting ATPase is composed of a catalytic alpha subunit, an auxiliary non-catalytic beta subunit and an additional regulatory subunit. Interacts with BSG.

The protein localises to the cell membrane. Functionally, this is the non-catalytic component of the active enzyme, which catalyzes the hydrolysis of ATP coupled with the exchange of Na(+) and K(+) ions across the plasma membrane. The exact function of the beta-2 subunit is not known. Mediates cell adhesion of neurons and astrocytes, and promotes neurite outgrowth. This chain is Sodium/potassium-transporting ATPase subunit beta-2 (ATP1B2), found in Ochotona curzoniae (Black-lipped pika).